The sequence spans 1109 residues: DNA-directed RNA polymerase subunit beta (1109 aa).

Belongs to the RNA polymerase beta chain family. In plastids the minimal PEP RNA polymerase catalytic core is composed of four subunits: alpha, beta, beta', and beta''. When a (nuclear-encoded) sigma factor is associated with the core the holoenzyme is formed, which can initiate transcription.

The protein resides in the plastid. Its subcellular location is the chloroplast. It catalyses the reaction RNA(n) + a ribonucleoside 5'-triphosphate = RNA(n+1) + diphosphate. In terms of biological role, DNA-dependent RNA polymerase catalyzes the transcription of DNA into RNA using the four ribonucleoside triphosphates as substrates. This Nephroselmis olivacea (Green alga) protein is DNA-directed RNA polymerase subunit beta.